The primary structure comprises 621 residues: tRNA uridine 5-carboxymethylaminomethyl modification enzyme MnmG (621 aa).

9 to 14 (GGGHAG) lines the FAD pocket. An NAD(+)-binding site is contributed by 270 to 284 (GPRYCPSIEDKIVKF).

This sequence belongs to the MnmG family. As to quaternary structure, homodimer. Heterotetramer of two MnmE and two MnmG subunits. The cofactor is FAD.

The protein localises to the cytoplasm. NAD-binding protein involved in the addition of a carboxymethylaminomethyl (cmnm) group at the wobble position (U34) of certain tRNAs, forming tRNA-cmnm(5)s(2)U34. In Borreliella afzelii (strain PKo) (Borrelia afzelii), this protein is tRNA uridine 5-carboxymethylaminomethyl modification enzyme MnmG.